We begin with the raw amino-acid sequence, 161 residues long: Ribonuclease P protein component (161 aa).

This sequence belongs to the RnpA family. Consists of a catalytic RNA component (M1 or rnpB) and a protein subunit.

The enzyme catalyses Endonucleolytic cleavage of RNA, removing 5'-extranucleotides from tRNA precursor.. In terms of biological role, RNaseP catalyzes the removal of the 5'-leader sequence from pre-tRNA to produce the mature 5'-terminus. It can also cleave other RNA substrates such as 4.5S RNA. The protein component plays an auxiliary but essential role in vivo by binding to the 5'-leader sequence and broadening the substrate specificity of the ribozyme. This Helicobacter pylori (strain Shi470) protein is Ribonuclease P protein component.